A 193-amino-acid chain; its full sequence is Peptidyl-tRNA hydrolase (193 aa).

Tyr-16 serves as a coordination point for tRNA. Residue His-21 is the Proton acceptor of the active site. 3 residues coordinate tRNA: Phe-67, Asn-69, and Asn-115.

The protein belongs to the PTH family. Monomer.

The protein localises to the cytoplasm. The enzyme catalyses an N-acyl-L-alpha-aminoacyl-tRNA + H2O = an N-acyl-L-amino acid + a tRNA + H(+). In terms of biological role, hydrolyzes ribosome-free peptidyl-tRNAs (with 1 or more amino acids incorporated), which drop off the ribosome during protein synthesis, or as a result of ribosome stalling. Functionally, catalyzes the release of premature peptidyl moieties from peptidyl-tRNA molecules trapped in stalled 50S ribosomal subunits, and thus maintains levels of free tRNAs and 50S ribosomes. The polypeptide is Peptidyl-tRNA hydrolase (Psychrobacter arcticus (strain DSM 17307 / VKM B-2377 / 273-4)).